The following is a 644-amino-acid chain: 3D-(3,5/4)-trihydroxycyclohexane-1,2-dione hydrolase 1 (644 aa).

Glu65 serves as a coordination point for thiamine diphosphate. Residues 442 to 522 (SLPGDLQRMW…INVLLFDNSG (81 aa)) are thiamine pyrophosphate binding. 2 residues coordinate Mg(2+): Asp493 and Asn520.

This sequence belongs to the TPP enzyme family. Mg(2+) is required as a cofactor. The cofactor is thiamine diphosphate.

The catalysed reaction is 3D-3,5/4-trihydroxycyclohexane-1,2-dione + H2O = 5-deoxy-D-glucuronate + H(+). It functions in the pathway polyol metabolism; myo-inositol degradation into acetyl-CoA; acetyl-CoA from myo-inositol: step 3/7. Involved in the cleavage of the C1-C2 bond of 3D-(3,5/4)-trihydroxycyclohexane-1,2-dione (THcHDO) to yield 5-deoxy-glucuronate (5DG). The sequence is that of 3D-(3,5/4)-trihydroxycyclohexane-1,2-dione hydrolase 1 from Bacillus cereus (strain ZK / E33L).